The primary structure comprises 529 residues: T-complex protein 1 subunit beta (529 aa).

This sequence belongs to the TCP-1 chaperonin family. In terms of assembly, heterooligomeric complex of about 850 to 900 kDa that forms two stacked rings, 12 to 16 nm in diameter.

Its subcellular location is the cytoplasm. Molecular chaperone; assists the folding of proteins upon ATP hydrolysis. Known to play a role, in vitro, in the folding of actin and tubulin. The polypeptide is T-complex protein 1 subunit beta (cct-2) (Caenorhabditis elegans).